We begin with the raw amino-acid sequence, 100 residues long: Large ribosomal subunit protein uL23 (100 aa).

It belongs to the universal ribosomal protein uL23 family. In terms of assembly, part of the 50S ribosomal subunit. Contacts protein L29, and trigger factor when it is bound to the ribosome.

In terms of biological role, one of the early assembly proteins it binds 23S rRNA. One of the proteins that surrounds the polypeptide exit tunnel on the outside of the ribosome. Forms the main docking site for trigger factor binding to the ribosome. The protein is Large ribosomal subunit protein uL23 of Mycobacterium marinum (strain ATCC BAA-535 / M).